The primary structure comprises 927 residues: Sodium/calcium exchanger 3 (927 aa).

The signal sequence occupies residues 1-30 (MAWLRLQPLTSAFLHFGLVTFVLFLNGLRA). The Extracellular portion of the chain corresponds to 31-73 (EAGDLRDVPSAGQNNESCSGSSDCKEGVILPIWYPENPSLGDK). Asn-45 is a glycosylation site (N-linked (GlcNAc...) asparagine). A helical transmembrane segment spans residues 74–94 (IARVIVYFVALIYMFLGVSII). Residues 95–147 (ADRFMASIEVITSQEREVTIKKPNGETSTTTIRVWNETVSNLTLMALGSSAPE) are Cytoplasmic-facing. One copy of the Alpha-1 repeat lies at 140–180 (ALGSSAPEILLSLIEVCGHGFIAGDLGPSTIVGSAAFNMFI). A helical transmembrane segment spans residues 148–168 (ILLSLIEVCGHGFIAGDLGPS). Thr-169 is a topological domain (extracellular). The helical transmembrane segment at 170–190 (IVGSAAFNMFIIIGICVYVIP) threads the bilayer. At 191–202 (DGETRKIKHLRV) the chain is on the cytoplasmic side. The chain crosses the membrane as a helical span at residues 203–223 (FFVTAAWSVFAYIWLYMILAV). At 224–230 (FSPGVVQ) the chain is on the extracellular side. Residues 231–251 (VWEGLLTLFFFPVCVLLAWVA) traverse the membrane as a helical segment. The Cytoplasmic segment spans residues 252–726 (DKRLLFYKYM…DESGEERLPS (475 aa)). Residues 253–272 (KRLLFYKYMHKRYRTDKHRG) form a putative calmodulin-binding region region. Calx-beta domains lie at 386-485 (VHTD…VRLS) and 519-619 (ATVT…IALG). Ca(2+) contacts are provided by Glu-409, Asp-445, Asp-470, Asp-471, Ile-473, Glu-475, Glu-478, Asp-525, Asp-526, Asp-527, Glu-543, Asp-579, Glu-606, Glu-607, and Glu-672. The helical transmembrane segment at 727–747 (CFDYVMHFLTVFWKVLFACVP) threads the bilayer. The Extracellular portion of the chain corresponds to 748 to 754 (PTEYCHG). Residues 755-775 (WACFVVSILIIGMLTAIIGDL) traverse the membrane as a helical segment. Residues 776–778 (ASH) are Cytoplasmic-facing. The chain crosses the membrane as a helical span at residues 779–799 (FGCTIGLKDSVTAVVFVAFGT). An Alpha-2 repeat occupies 796–832 (AFGTSVPDTFASKAAALQDVYADASIGNVTGSNAVNV). Residues 800-828 (SVPDTFASKAAALQDVYADASIGNVTGSN) are Extracellular-facing. Residue Asn-823 is glycosylated (N-linked (GlcNAc...) asparagine). Residues 829–849 (AVNVFLGIGLAWSVAAIYWAM) traverse the membrane as a helical segment. Over 850 to 860 (QGQEFHVSAGT) the chain is Cytoplasmic. A helical membrane pass occupies residues 861–881 (LAFSVTLFTIFAFVCLSVLLY). Over 882 to 903 (RRRPHLGGELGGPRGCKLATTW) the chain is Extracellular. Residues 904-924 (LFVSLWLLYVLFATLEAYCYI) traverse the membrane as a helical segment. Over 925 to 927 (KGF) the chain is Cytoplasmic.

This sequence belongs to the Ca(2+):cation antiporter (CaCA) (TC 2.A.19) family. SLC8 subfamily. As to quaternary structure, interacts with AKAP1. In terms of tissue distribution, detected in neurons in brain cortex and hippocampus. Detected in pyramidal cell bodies and processes, in granule cells and interneurons in the CA1 and CA3 region of the hippocampus. Detected on astrocyte processes in brain cortex. Detected on endothelial cells in hippocampus capillaries (at protein level). Restricted to brain and skeletal muscle.

It localises to the cell membrane. Its subcellular location is the perikaryon. The protein resides in the cell projection. The protein localises to the dendrite. It is found in the dendritic spine. It localises to the sarcolemma. Its subcellular location is the cytoplasm. The protein resides in the sarcoplasm. The protein localises to the cell junction. It is found in the mitochondrion outer membrane. It localises to the endoplasmic reticulum membrane. Its subcellular location is the perinuclear region. The enzyme catalyses Ca(2+)(in) + 3 Na(+)(out) = Ca(2+)(out) + 3 Na(+)(in). With respect to regulation, calcium transport is down-regulated by Na(+) and stimulated by Ca(2+). Its function is as follows. Mediates the electrogenic exchange of Ca(2+) against Na(+) ions across the cell membrane, and thereby contributes to the regulation of cytoplasmic Ca(2+) levels and Ca(2+)-dependent cellular processes. Contributes to cellular Ca(2+) homeostasis in excitable cells, both in muscle and in brain. In a first phase, voltage-gated channels mediate the rapid increase of cytoplasmic Ca(2+) levels due to release of Ca(2+) stores from the endoplasmic reticulum. SLC8A3 mediates the export of Ca(2+) from the cell during the next phase, so that cytoplasmic Ca(2+) levels rapidly return to baseline. Contributes to Ca(2+) transport during excitation-contraction coupling in muscle. In neurons, contributes to the rapid decrease of cytoplasmic Ca(2+) levels back to baseline after neuronal activation, and thereby contributes to modulate synaptic plasticity, learning and memory. Required for normal oligodendrocyte differentiation and for normal myelination. Mediates Ca(2+) efflux from mitochondria and contributes to mitochondrial Ca(2+) ion homeostasis. The sequence is that of Sodium/calcium exchanger 3 (Slc8a3) from Rattus norvegicus (Rat).